Consider the following 366-residue polypeptide: Geranylgeranyl pyrophosphate synthase, chloroplastic/chromoplastic (366 aa).

Residues 44 to 65 form a disordered region; that stretch reads KRTVSSSSSSSLITKEDNNLKS. Residues lysine 112, arginine 115, and histidine 144 each coordinate isopentenyl diphosphate. Mg(2+) is bound by residues aspartate 151 and aspartate 157. Arginine 162 is a dimethylallyl diphosphate binding site. An isopentenyl diphosphate-binding site is contributed by arginine 163. Dimethylallyl diphosphate contacts are provided by lysine 251, threonine 252, glutamine 289, lysine 306, and lysine 316.

This sequence belongs to the FPP/GGPP synthase family. In terms of assembly, dimer. It depends on Mg(2+) as a cofactor.

It localises to the plastid. The protein localises to the chloroplast stroma. The protein resides in the chromoplast. The enzyme catalyses isopentenyl diphosphate + dimethylallyl diphosphate = (2E)-geranyl diphosphate + diphosphate. The catalysed reaction is isopentenyl diphosphate + (2E)-geranyl diphosphate = (2E,6E)-farnesyl diphosphate + diphosphate. It carries out the reaction isopentenyl diphosphate + (2E,6E)-farnesyl diphosphate = (2E,6E,10E)-geranylgeranyl diphosphate + diphosphate. It participates in isoprenoid biosynthesis; farnesyl diphosphate biosynthesis; farnesyl diphosphate from geranyl diphosphate and isopentenyl diphosphate: step 1/1. Its pathway is isoprenoid biosynthesis; geranyl diphosphate biosynthesis; geranyl diphosphate from dimethylallyl diphosphate and isopentenyl diphosphate: step 1/1. It functions in the pathway isoprenoid biosynthesis; geranylgeranyl diphosphate biosynthesis; geranylgeranyl diphosphate from farnesyl diphosphate and isopentenyl diphosphate: step 1/1. In terms of biological role, catalyzes the trans-addition of the three molecules of IPP onto DMAPP to form geranylgeranyl pyrophosphate. This is Geranylgeranyl pyrophosphate synthase, chloroplastic/chromoplastic (GGPS1) from Sinapis alba (White mustard).